A 362-amino-acid polypeptide reads, in one-letter code: tRNA/tmRNA (uracil-C(5))-methyltransferase (362 aa).

Glutamine 182, tyrosine 210, asparagine 215, glutamate 231, and aspartate 293 together coordinate S-adenosyl-L-methionine. The active-site Nucleophile is the cysteine 318. The active-site Proton acceptor is the glutamate 352.

This sequence belongs to the class I-like SAM-binding methyltransferase superfamily. RNA M5U methyltransferase family. TrmA subfamily.

It carries out the reaction uridine(54) in tRNA + S-adenosyl-L-methionine = 5-methyluridine(54) in tRNA + S-adenosyl-L-homocysteine + H(+). The catalysed reaction is uridine(341) in tmRNA + S-adenosyl-L-methionine = 5-methyluridine(341) in tmRNA + S-adenosyl-L-homocysteine + H(+). Its function is as follows. Dual-specificity methyltransferase that catalyzes the formation of 5-methyluridine at position 54 (m5U54) in all tRNAs, and that of position 341 (m5U341) in tmRNA (transfer-mRNA). This Neisseria gonorrhoeae (strain ATCC 700825 / FA 1090) protein is tRNA/tmRNA (uracil-C(5))-methyltransferase.